The chain runs to 308 residues: Putative mitochondrial transporter UCP3 (308 aa).

At 1 to 10 the chain is on the mitochondrial intermembrane side; that stretch reads MVGLQPSEVP. Residues 11–32 traverse the membrane as a helical segment; sequence PTTVVKFLGAGTAACFADLLTF. Solcar repeat units lie at residues 11–102, 111–202, and 211–296; these read PTTV…VKQF, SSVA…IKEK, and DNFP…LKRA. Topologically, residues 33–73 are mitochondrial matrix; the sequence is PLDTAKVRLQIQGENPGAQSVQYRGVLGTILTMVRTEGPRS. The helical transmembrane segment at 74-96 threads the bilayer; it reads PYSGLVAGLHRQMSFASIRIGLY. At 97-116 the chain is on the mitochondrial intermembrane side; it reads DSVKQFYTPKGADHSSVAIR. The chain crosses the membrane as a helical span at residues 117–133; sequence ILAGCTTGAMAVTCAQP. At 134 to 179 the chain is on the mitochondrial matrix side; sequence TDVVKVRFQAMIRLGTGGERKYRGTMDAYRTIAREEGVRGLWKGTW. A helical membrane pass occupies residues 180–196; it reads PNITRNAIVNCAEMVTY. The Mitochondrial intermembrane segment spans residues 197–213; that stretch reads DIIKEKLLESHLFTDNF. The helical transmembrane segment at 214-233 threads the bilayer; that stretch reads PCHFVSAFGAGFCATVVASP. The Mitochondrial matrix portion of the chain corresponds to 234–267; the sequence is VDVVKTRYMNAPLGRYRSPLHCMLKMVAQEGPTA. A helical transmembrane segment spans residues 268–290; the sequence is FYKGFVPSFLRLGAWNVMMFVTY. Positions 275–297 are purine nucleotide binding; the sequence is SFLRLGAWNVMMFVTYEQLKRAL. At 291-308 the chain is on the mitochondrial intermembrane side; sequence EQLKRALMKVQVLRESPF.

It belongs to the mitochondrial carrier (TC 2.A.29) family. Interacts with HAX1; the interaction is direct and calcium-dependent.

Its subcellular location is the mitochondrion inner membrane. Inhibited by purine nucleotides and inorganic phosphate (in vitro). Functionally, putative transmembrane transporter that plays a role in mitochondrial metabolism via an as yet unclear mechanism. Originally, this mitochondrial protein was thought to act as a proton transmembrane transporter from the mitochondrial intermembrane space into the matrix, causing proton leaks through the inner mitochondrial membrane, thereby uncoupling mitochondrial membrane potential generation from ATP synthesis. However, this function is controversial and uncoupling may not be the function, or at least not the main function, but rather a consequence of more conventional metabolite transporter activity. The chain is Putative mitochondrial transporter UCP3 from Mus musculus (Mouse).